A 146-amino-acid polypeptide reads, in one-letter code: Large ribosomal subunit protein uL15 (146 aa).

The disordered stretch occupies residues 1–56; the sequence is MKLHELRAAEGANKASKRVGRGTGSGLGKTSGRGQNGQNSRSGGGVRPGFEGGQMP. Gly residues-rich tracts occupy residues 21–35 and 42–52; these read RGTG…GRGQ and SGGGVRPGFEG.

This sequence belongs to the universal ribosomal protein uL15 family. Part of the 50S ribosomal subunit.

Its function is as follows. Binds to the 23S rRNA. This Clostridium botulinum (strain Okra / Type B1) protein is Large ribosomal subunit protein uL15.